Reading from the N-terminus, the 140-residue chain is MAKKVMALIKLQVEAGKANPSPPIGPALGQHGVNIMDFCKAFNARTANDAGSIIPVVITVYQDRSFTFITKTPPASMLLKRAAKISKGSGVPNRDKVGKVTHDQLVEIATLKMEDLNAADVDAAVSIIAGTARSMGIEVV.

Belongs to the universal ribosomal protein uL11 family. Part of the ribosomal stalk of the 50S ribosomal subunit. Interacts with L10 and the large rRNA to form the base of the stalk. L10 forms an elongated spine to which L12 dimers bind in a sequential fashion forming a multimeric L10(L12)X complex. In terms of processing, one or more lysine residues are methylated.

In terms of biological role, forms part of the ribosomal stalk which helps the ribosome interact with GTP-bound translation factors. The sequence is that of Large ribosomal subunit protein uL11 from Desulforapulum autotrophicum (strain ATCC 43914 / DSM 3382 / VKM B-1955 / HRM2) (Desulfobacterium autotrophicum).